A 217-amino-acid chain; its full sequence is Uracil-DNA glycosylase (217 aa).

The active-site Proton acceptor is aspartate 62.

The protein belongs to the uracil-DNA glycosylase (UDG) superfamily. UNG family.

It localises to the cytoplasm. It carries out the reaction Hydrolyzes single-stranded DNA or mismatched double-stranded DNA and polynucleotides, releasing free uracil.. Its function is as follows. Excises uracil residues from the DNA which can arise as a result of misincorporation of dUMP residues by DNA polymerase or due to deamination of cytosine. This is Uracil-DNA glycosylase from Streptococcus pneumoniae (strain Hungary19A-6).